Consider the following 396-residue polypeptide: S-adenosylmethionine synthase (396 aa).

Histidine 16 contacts ATP. Aspartate 18 contacts Mg(2+). Glutamate 44 provides a ligand contact to K(+). Residues glutamate 57 and glutamine 100 each contribute to the L-methionine site. The tract at residues 100-110 (QSVDIAQGVDR) is flexible loop. Residues 165–167 (DAK), aspartate 240, 246–247 (RK), alanine 263, and lysine 267 contribute to the ATP site. Residue aspartate 240 participates in L-methionine binding. Lysine 271 contacts L-methionine.

Belongs to the AdoMet synthase family. Homotetramer; dimer of dimers. The cofactor is Mg(2+). Requires K(+) as cofactor.

The protein localises to the cytoplasm. It catalyses the reaction L-methionine + ATP + H2O = S-adenosyl-L-methionine + phosphate + diphosphate. It functions in the pathway amino-acid biosynthesis; S-adenosyl-L-methionine biosynthesis; S-adenosyl-L-methionine from L-methionine: step 1/1. Its function is as follows. Catalyzes the formation of S-adenosylmethionine (AdoMet) from methionine and ATP. The overall synthetic reaction is composed of two sequential steps, AdoMet formation and the subsequent tripolyphosphate hydrolysis which occurs prior to release of AdoMet from the enzyme. This is S-adenosylmethionine synthase from Stutzerimonas stutzeri (strain A1501) (Pseudomonas stutzeri).